The sequence spans 404 residues: Pre-heme d1 synthase (404 aa).

The region spanning 22 to 235 (GTPKPVVIWN…LIARALESAE (214 aa)) is the Radical SAM core domain. 7 residues coordinate [4Fe-4S] cluster: cysteine 36, cysteine 40, cysteine 43, cysteine 340, cysteine 343, cysteine 349, and cysteine 371.

Belongs to the radical SAM superfamily. [4Fe-4S] cluster serves as cofactor.

The protein operates within porphyrin-containing compound metabolism. Its function is as follows. Involved in heme d1 biosynthesis. Radical SAM enzyme that catalyzes the removal of two propionate side chains from the intermediate 12,18-didecarboxysiroheme (DDSH) and may introduce the keto functions on rings A and B, yielding the heme d1 precursor dihydro-heme d1. The sequence is that of Pre-heme d1 synthase from Dinoroseobacter shibae (strain DSM 16493 / NCIMB 14021 / DFL 12).